The primary structure comprises 1225 residues: MVREEEKGIPVRVVRCRPLVPKETSEGCQMCLSFVPGEPQVIVGSDKAFTYDYVFDPSVEQEEVFNTAVAPLIRGIFKGYNATVLAYGQTGSGKTYSMGGTYTASQEHDPSMGVIPRVIKLLFKEKEQRQDWEFVLKVSYLEIYNEDILDLLCSSRERSSQISIREDPKEGIKIVGLTERNVASARDTVSCLEQGNNCRTVASTAMNSQSSRSHAIFTICIDQKKKNDKNSSFHSKLHLVDLAGSERQKKTKAEGDRLKEGININRGLLCLGNVISALGEENKKGGFVPYRDSKLTRLLQDSLGGNSHTLMIACVSPADSNLEETLNTLRYADRARKIKNKPIVNVDPQAAELNHLKQQVQQLQVLLLQAHGGTLPVSINSMAPSENLQSLMEKNQSLMEENEKLSRGLSEAAGQTAQMLERIIVTEQENEKMNAKLEQLQQHAVCKLDLQKLLETVEDEELKENVEVIRNLQQVLAQFQSESAAAAEAATEMANAEQDAAGEAETGQVTKRSSDDFTTQHALRQAQMSKELVELNKALALKEALAKKMIQNDSQLEPIQSQYQTNIKDLELEVSNLQKEKEELILALSMAKKDVNQAKLSERRRKRLQELEGQINELKKKLNEQAKLLKLKESTERTVSKLNQEIREMKNQRVQLMRQMKEDAEKFRQWKQQKDKEVIQLKERDRKRQYELLKLERDFQKQASVLRRKTEEAAAANKRLKDALQKQREAADKRKESQNRGMEGVAARVKSWLANEVEVLVSTEEARRHLADLLEDRKILAQELLQLKEKKESGENPPSKLRRRTYSITDLQASEMDLSLSKQIESLETEMELRSAQIADLQQKLLDADNGDRVKQRWDNIATILEAKCALKYLLGELVSSKVQESKLESSLQQSKTNCSDIQKMLIEERNHATEMEAEFQNQLLLQEQQHQQEVLYLLSQFQQKEAPGKGVEDSLSEQEKQMQERLKFQEKELEKMREICEKNQELLQENDVLKQKMLLVQVASGQKLRRDQQVSPESPDSPFDYIPPKPKTRRQTVAKPRAPTPEMNVEELFSDSEESGEEEDAEWVPVKAAKGTKKSATGCFCKGRCGNRQCGCRKQKVGCTAGCSCDSTKCRNRDPGFQDATVCEDQTKDSEGSFKLEDLRDVTAGETFFQPVYSPPTMKVLKDITDQGVFMKKPSTAASLLVRDEESQENQLPFVKKKKRMLSSNTSFFSGCTPIKEEID.

One can recognise a Kinesin motor domain in the interval 9 to 338; the sequence is IPVRVVRCRP…LRYADRARKI (330 aa). 88 to 95 provides a ligand contact to ATP; that stretch reads GQTGSGKT. A coiled-coil region spans residues 352 to 1003; it reads ELNHLKQQVQ…LKQKMLLVQV (652 aa). Disordered regions lie at residues 498-520, 717-744, and 1006-1047; these read QDAA…FTTQ, NKRL…GMEG, and GQKL…PTPE. Positions 507–520 are enriched in polar residues; that stretch reads GQVTKRSSDDFTTQ. Basic and acidic residues predominate over residues 719 to 738; that stretch reads RLKDALQKQREAADKRKESQ. The globular stretch occupies residues 1004-1225; that stretch reads ASGQKLRRDQ…GCTPIKEEID (222 aa).

It belongs to the TRAFAC class myosin-kinesin ATPase superfamily. Kinesin family. Chromokinesin subfamily. The cofactor is [2Fe-2S] cluster. It depends on [4Fe-4S] cluster as a cofactor. Expressed in proliferating cells; neuroepithelium of embryos.

The protein localises to the nucleus. It is found in the chromosome. The protein resides in the cytoplasm. Its subcellular location is the cytoskeleton. Its function is as follows. Iron-sulfur (Fe-S) cluster binding motor protein that has a role in chromosome segregation during mitosis. Required for mitotic chromosomal positioning and bipolar spindle stabilization. This Gallus gallus (Chicken) protein is Chromosome-associated kinesin KIF4 (KIF4).